Reading from the N-terminus, the 235-residue chain is STARD3 N-terminal-like protein (235 aa).

Methionine 1 carries the post-translational modification N-acetylmethionine. The interval 1-20 (MNHLPEHMENTLTGSQSSHA) is disordered. At 1-53 (MNHLPEHMENTLTGSQSSHASLRDIHSINPAQLMARIESYEGREKKGISDVRR) the chain is on the cytoplasmic side. Over residues 10–20 (NTLTGSQSSHA) the composition is skewed to polar residues. Serine 15, serine 21, and serine 27 each carry phosphoserine. One can recognise an MENTAL domain in the interval 48 to 218 (ISDVRRTFCL…YSPPESEAGS (171 aa)). A helical transmembrane segment spans residues 54-74 (TFCLFVTFDLLFVTLLWIIEL). The Extracellular segment spans residues 75-97 (NVNGGIENTLKKEVIHYDYYSSY). The helical transmembrane segment at 98-118 (FDIFLLAVFRFKVLILGYAVC) threads the bilayer. At 119–122 (RLRH) the chain is on the cytoplasmic side. The helical transmembrane segment at 123-143 (WWAIALTTAVTSAFLLAKVIL) threads the bilayer. The Extracellular portion of the chain corresponds to 144–150 (SKLFSQG). The helical transmembrane segment at 151–171 (AFGYVLPIISFILAWIETWFL) threads the bilayer. Over 172–235 (DFKVLPQEAE…QESEKPLLEL (64 aa)) the chain is Cytoplasmic. Serine 193 bears the Phosphoserine mark. Residues 202–235 (GLSDGQFYSPPESEAGSEEEAEEKQESEKPLLEL) form a disordered region. The FFAT signature appears at 208–213 (FYSPPE). Residues 225-235 (KQESEKPLLEL) are compositionally biased toward basic and acidic residues.

It belongs to the STARD3 family. In terms of assembly, homodimer. Interacts (via the MENTAL domain) with STARD3NL. Interacts (via FFAT motif) with VAPA. Interacts (via FFAT motif) with VAPB. Interacts (via FFAT motif) with MOSPD2 (via MSP domain).

The protein localises to the late endosome membrane. Its function is as follows. Tethering protein that creates contact site between the endoplasmic reticulum and late endosomes: localizes to late endosome membranes and contacts the endoplasmic reticulum via interaction with VAPA and VAPB. This Mus musculus (Mouse) protein is STARD3 N-terminal-like protein.